Reading from the N-terminus, the 139-residue chain is Thioredoxin 2 (139 aa).

A zinc finger spans residues 5-18 (CTHCQAINRIPDDR). Residues 26 to 139 (GRCGHDLFDG…PFDSWLNESL (114 aa)) form the Thioredoxin domain. A disulfide bridge links Cys64 with Cys67.

This sequence belongs to the thioredoxin family.

It is found in the cytoplasm. The enzyme catalyses [protein]-dithiol + NAD(+) = [protein]-disulfide + NADH + H(+). It carries out the reaction [protein]-dithiol + NADP(+) = [protein]-disulfide + NADPH + H(+). In terms of biological role, efficient electron donor for the essential enzyme ribonucleotide reductase. Is also able to reduce the interchain disulfide bridges of insulin. This Escherichia coli O6:H1 (strain CFT073 / ATCC 700928 / UPEC) protein is Thioredoxin 2 (trxC).